A 461-amino-acid polypeptide reads, in one-letter code: Transforming growth factor beta-1-induced transcript 1 protein (461 aa).

Residue methionine 1 is modified to N-acetylmethionine. The interval 1 to 86 (MEDLDALLSD…PPFSSSSGVL (86 aa)) is disordered. The interval 1-200 (MEDLDALLSD…GCPSPPGQTN (200 aa)) is transcription activation. The tract at residues 1-240 (MEDLDALLSD…CNKPIAGQVV (240 aa)) is interaction with PTK2B/PYK2. The short motif at 3–15 (DLDALLSDLETTT) is the LD motif 1 element. A Phosphothreonine modification is found at threonine 33. A Phosphotyrosine modification is found at tyrosine 38. The span at 41–52 (QPQTGSGESSGA) shows a compositional bias: polar residues. Tyrosine 60 carries the phosphotyrosine; by FAK2 and FYN modification. Phosphoserine is present on serine 68. Residues 69 to 83 (PKSVAPVAPPFSSSS) show a composition bias toward low complexity. Residues 83–136 (SGVLGNGLCELDRLLQELNATQFNITDEIMSQFPSSKMAEGEGKEDQSEDKSIT) are interaction with PTK2/FAK1. Positions 92–104 (ELDRLLQELNATQ) match the LD motif 2 motif. The segment at 116–154 (PSSKMAEGEGKEDQSEDKSITTVPSSTFPAPSKPSATSA) is disordered. Over residues 121–134 (AEGEGKEDQSEDKS) the composition is skewed to basic and acidic residues. Residues 135–154 (ITTVPSSTFPAPSKPSATSA) show a composition bias toward polar residues. Residues serine 140, serine 141, serine 164, and serine 186 each carry the phosphoserine modification. The LD motif 3 motif lies at 157–168 (ELDRLMASLSDF). The disordered stretch occupies residues 171 to 204 (QNHLPASGPPQPPAVSPTREGCPSPPGQTNKGSL). Phosphothreonine is present on threonine 188. Serine 194 is modified (phosphoserine). Positions 203-215 (SLDTMLGLLQSDL) match the LD motif 4 motif. LIM zinc-binding domains follow at residues 226 to 285 (GLCG…RFSP), 286 to 343 (RCGF…QLFA), 344 to 403 (PRCQ…QRGS), and 404 to 461 (LCAT…KLFG). Residue serine 403 is modified to Phosphoserine. Threonine 407 is modified (phosphothreonine).

It belongs to the paxillin family. In terms of assembly, homooligomer. Interacts with PPARG. Interacts with TRAF4. Interacts with CRIP2. Interacts with HSPB1. Interacts with ILK. Interacts with LIMS1 and LIMS2. Interacts with NCK2. Interacts with NUDT16L1. Interacts with PAK. Interacts with PTPN12. Interacts with TCF3. Interacts with TCF7L2. Interacts with VCL. Interacts (via LD motif 3) with GIT1. Also interacts with GIT2. Forms a complex with ARHGEF7. Interacts with AR/androgen receptor in a ligand-dependent manner. Interacts with CSK. Interacts with PTK2/FAK1 and PTK2B/PYK2. Interacts with SLC6A3 and SLC6A4. Interacts with NR3C1. Interacts with SMAD3. Interacts with MAPK15. Interacts with SRC. Interacts with LYN. Interacts with talin. Interacts (via LIM zinc-binding domain 2) with CBLC (via RING-type zinc finger); the interaction is direct and enhances CBLC E3 ubiquitin-protein ligase activity. Interacts with PARVA. Interacts with PXN. In terms of processing, phosphorylated by gonadotropin-releasing hormone-activated SRC. In terms of tissue distribution, strongly expressed in large intestine, lung, spleen, testis, uterus and to a lower extent in brain, kidney and liver (at protein level). In brain, expressed by neuronal and non neuronal cells (at protein level).

It localises to the cell junction. It is found in the focal adhesion. The protein localises to the nucleus matrix. The protein resides in the cytoplasm. Its subcellular location is the cytoskeleton. Functionally, functions as a molecular adapter coordinating multiple protein-protein interactions at the focal adhesion complex and in the nucleus. Links various intracellular signaling modules to plasma membrane receptors and regulates the Wnt and TGFB signaling pathways. May also regulate SLC6A3 and SLC6A4 targeting to the plasma membrane hence regulating their activity. In the nucleus, functions as a nuclear receptor coactivator regulating glucocorticoid, androgen, mineralocorticoid and progesterone receptor transcriptional activity. May play a role in the processes of cell growth, proliferation, migration, differentiation and senescence. May have a zinc-dependent DNA-binding activity. In Rattus norvegicus (Rat), this protein is Transforming growth factor beta-1-induced transcript 1 protein (Tgfb1i1).